We begin with the raw amino-acid sequence, 770 residues long: Signal transducer and activator of transcription 3 (770 aa).

Ala2 carries the post-translational modification N-acetylalanine. Lys49 and Lys87 each carry N6-acetyllysine. Positions 150–162 match the Essential for nuclear import motif; the sequence is DVRKRVQDLEQKM. The SH2 domain occupies 580–670; the sequence is WNEGYIMGFI…DATNILVSPL (91 aa). Lys601, Lys615, and Lys631 each carry allysine; alternate. An N6-acetyllysine; alternate mark is found at Lys601, Lys615, and Lys631. Position 640 is a phosphotyrosine; by TYK2 (Tyr640). Allysine; alternate is present on Lys685. An N6-acetyllysine; alternate modification is found at Lys685. Tyr705 is subject to Phosphotyrosine; by FER and PTK6. Lys707 is modified (N6-acetyllysine). At Thr714 the chain carries Phosphothreonine. Ser727 carries the phosphoserine; by DYRK2, NLK, NEK6, IRAK1, RPS6KA5, ZIPK/DAPK3 and PKC/PRKCE modification.

Belongs to the transcription factor STAT family. As to quaternary structure, forms a homodimer or a heterodimer with a related family member (at least STAT1). Component of a promoter-binding complex composed of STAT3, NFATC3 and NFATC4; complex formation is enhanced by calcineurin. Interacts with IL31RA, NCOA1, PELP1, SIPAR, SOCS7, STATIP1 and TMF1. Interacts with IL23R in presence of IL23. Interacts (via SH2 domain) with NLK. Interacts with ARL2BP; the interaction is enhanced by LIF and JAK1 expression. Interacts with KPNA4 and KPNA5; KPNA4 may be the primary mediator of nuclear import. Interacts with CAV2; the interaction is increased on insulin-induced tyrosine phosphorylation of CAV2 and leads to STAT3 activation. Interacts with ARL2BP; interaction is enhanced with ARL2. Interacts with NEK6. Binds to CDK9 when activated and nuclear. Interacts with BMX. Interacts with ZIPK/DAPK3. Interacts with PIAS3; the interaction occurs on stimulation by IL6, CNTF or OSM and inhibits the DNA binding activity of STAT3. In prostate cancer cells, interacts with PRKCE and promotes DNA binding activity of STAT3. Interacts with STMN3, antagonizing its microtubule-destabilizing activity. Interacts with the 'Lys-129' acetylated form of BIRC5/survivin. Interacts with FER. Interacts (via SH2 domain) with EIF2AK2/PKR (via the kinase catalytic domain). Interacts with FGFR4. Interacts with INPP5F; the interaction is independent of STAT3 Tyr-705 phosphorylation status. Interacts with OCIAD1. Interacts with OCIAD2. Interacts (unphosphorylated or phosphorylated at Ser-727) with PHB1. Interacts and may form heterodimers with NHLH1. Found in a complex with SLC39A6, SLC39A10 and with the 'Ser-727' phosphorylated form of STAT3 throughout mitosis. Interacts (when acetylated) with EP300 (via bromo domain); interaction takes place following STAT3 acetylation by EP300 and promotes enhanceosome assembly. Interacts (when acetylated) with BRD2 (via bromo domain); interaction promotes STAT3 recruitment to chromatin and T-helper Th17 cell differentiation. Interacts with FAM220A/SIPAR; the interaction occurs in both the nucleus and the cytoplasm, is enhanced by IL6 and promotes STAT3 dephosphorylation. Interacts in both unphosphorylated and phosphorylated forms with FAM220A but interacts preferentially in the phosphorylated form in the nucleus. Interacts with PTPN2; the interaction is promoted by FAM220A and leads to STAT3 dephosphorylation which negatively regulates STAT3 transcriptional activator activity. Activated through tyrosine phosphorylation by BMX. Tyrosine phosphorylated in response to IL6, IL11, CNTF, LIF, KITLG/SCF, CSF1, EGF, PDGF, IFN-alpha, LEP and OSM. Activated KIT promotes phosphorylation on tyrosine residues and subsequent translocation to the nucleus. Tyrosine phosphorylated in response to constitutively activated FGFR1, FGFR2, FGFR3 and FGFR4. Phosphorylated on serine upon DNA damage, probably by ATM or ATR. Serine phosphorylation is important for the formation of stable DNA-binding STAT3 homodimers and maximal transcriptional activity. ARL2BP may participate in keeping the phosphorylated state of STAT3 within the nucleus. Tyrosine phosphorylated upon stimulation with EGF. Upon LPS challenge, phosphorylated within the nucleus by IRAK1. Upon UV-A treatment, phosphorylated on Ser-727 by RPS6KA5. Dephosphorylation on tyrosine residues by PTPN2 negatively regulates IL6/interleukin-6 signaling. Phosphorylation at Tyr-705 by PTK6, isoform M2 of PKM (PKM2) or FER leads to an increase of its transcriptional activity. Phosphorylation at Tyr-705 is increased in the presence of calcineurin. Phosphorylation at Tyr-640 by TYK2 negatively regulates transcriptional activity. In terms of processing, acetylated on lysine residues by EP300/p300, promoting its activation. Acetylation at Lys-49 and Lys-87 by EP300/p300 promotes its activation. Acetylation at Lys-87 by EP300/p300 promotes its association with BRD2 and recruitment to chromatin. Deacetylated at Lys-49 and Lys-87 by HDAC1. Acetylation at Lys-685 by EP300/p300 promotes its homodimerization and activation. Deacetylated at Lys-685 by HDAC3. Acetylated on lysine residues by CREBBP. Deacetylation by LOXL3 leads to disrupt STAT3 dimerization and inhibit STAT3 transcription activity. Oxidation of lysine residues to allysine on STAT3 preferentially takes place on lysine residues that are acetylated. Post-translationally, some lysine residues are oxidized to allysine by LOXL3, leading to disrupt STAT3 dimerization and inhibit STAT3 transcription activity. Oxidation of lysine residues to allysine on STAT3 preferentially takes place on lysine residues that are acetylated. (Microbial infection) Phosphorylated on Tyr-705 in the presence of S.typhimurium SarA. As to expression, expressed in ventricular cardiomyocytes (at protein level). Expressed in the lung (at protein level). Expressed in the liver, spleen and kidney. In terms of tissue distribution, expressed in the liver.

It is found in the cytoplasm. The protein resides in the nucleus. Its function is as follows. Signal transducer and transcription activator that mediates cellular responses to interleukins, KITLG/SCF, LEP and other growth factors. Once activated, recruits coactivators, such as NCOA1 or MED1, to the promoter region of the target gene. May mediate cellular responses to activated FGFR1, FGFR2, FGFR3 and FGFR4. Upon activation of IL6ST/gp130 signaling by interleukin-6 (IL6), binds to the IL6-responsive elements identified in the promoters of various acute-phase protein genes. Activated by IL31 through IL31RA. Acts as a regulator of inflammatory response by regulating differentiation of naive CD4(+) T-cells into T-helper Th17 or regulatory T-cells (Treg): acetylation promotes its transcription activity and cell differentiation while deacetylation and oxidation of lysine residues by LOXL3 inhibits differentiation. Involved in cell cycle regulation by inducing the expression of key genes for the progression from G1 to S phase, such as CCND1. Mediates the effects of LEP on melanocortin production, body energy homeostasis and lactation. May play an apoptotic role by transctivating BIRC5 expression under LEP activation. Cytoplasmic STAT3 represses macroautophagy by inhibiting EIF2AK2/PKR activity. Plays a crucial role in basal beta cell functions, such as regulation of insulin secretion. Following JAK/STAT signaling activation and as part of a complex with NFATC3 and NFATC4, binds to the alpha-beta E4 promoter region of CRYAB and activates transcription in cardiomyocytes. Plays an important role in host defense in methicillin-resistant S.aureus lung infection by regulating the expression of the antimicrobial lectin REG3G. This is Signal transducer and activator of transcription 3 from Mus musculus (Mouse).